The following is a 118-amino-acid chain: Large ribosomal subunit protein uL18 (118 aa).

It belongs to the universal ribosomal protein uL18 family. As to quaternary structure, part of the 50S ribosomal subunit; part of the 5S rRNA/L5/L18/L25 subcomplex. Contacts the 5S and 23S rRNAs.

Functionally, this is one of the proteins that bind and probably mediate the attachment of the 5S RNA into the large ribosomal subunit, where it forms part of the central protuberance. The polypeptide is Large ribosomal subunit protein uL18 (Rickettsia typhi (strain ATCC VR-144 / Wilmington)).